Reading from the N-terminus, the 185-residue chain is Ribosome-recycling factor (185 aa).

This sequence belongs to the RRF family.

The protein localises to the cytoplasm. Functionally, responsible for the release of ribosomes from messenger RNA at the termination of protein biosynthesis. May increase the efficiency of translation by recycling ribosomes from one round of translation to another. In Shewanella sediminis (strain HAW-EB3), this protein is Ribosome-recycling factor.